A 291-amino-acid chain; its full sequence is Bifunctional protein FolD (291 aa).

NADP(+) is bound by residues 166-168 (GAS) and isoleucine 232.

It belongs to the tetrahydrofolate dehydrogenase/cyclohydrolase family. As to quaternary structure, homodimer.

The catalysed reaction is (6R)-5,10-methylene-5,6,7,8-tetrahydrofolate + NADP(+) = (6R)-5,10-methenyltetrahydrofolate + NADPH. It catalyses the reaction (6R)-5,10-methenyltetrahydrofolate + H2O = (6R)-10-formyltetrahydrofolate + H(+). It functions in the pathway one-carbon metabolism; tetrahydrofolate interconversion. Functionally, catalyzes the oxidation of 5,10-methylenetetrahydrofolate to 5,10-methenyltetrahydrofolate and then the hydrolysis of 5,10-methenyltetrahydrofolate to 10-formyltetrahydrofolate. The polypeptide is Bifunctional protein FolD (Photorhabdus laumondii subsp. laumondii (strain DSM 15139 / CIP 105565 / TT01) (Photorhabdus luminescens subsp. laumondii)).